The sequence spans 188 residues: Peptidyl-tRNA hydrolase (188 aa).

Tyr-14 contacts tRNA. His-19 serves as the catalytic Proton acceptor. TRNA is bound by residues Tyr-64, Asn-66, and Asn-112.

It belongs to the PTH family. In terms of assembly, monomer.

The protein resides in the cytoplasm. The enzyme catalyses an N-acyl-L-alpha-aminoacyl-tRNA + H2O = an N-acyl-L-amino acid + a tRNA + H(+). In terms of biological role, hydrolyzes ribosome-free peptidyl-tRNAs (with 1 or more amino acids incorporated), which drop off the ribosome during protein synthesis, or as a result of ribosome stalling. Its function is as follows. Catalyzes the release of premature peptidyl moieties from peptidyl-tRNA molecules trapped in stalled 50S ribosomal subunits, and thus maintains levels of free tRNAs and 50S ribosomes. The polypeptide is Peptidyl-tRNA hydrolase (Bacillus pumilus (strain SAFR-032)).